Consider the following 955-residue polypeptide: RNA polymerase-associated protein RapA (955 aa).

One can recognise a Helicase ATP-binding domain in the interval Glu163–Glu333. Position 176-183 (Asp176–Thr183) interacts with ATP. The short motif at Asp279–His282 is the DEAH box element. A Helicase C-terminal domain is found at Arg478–Leu642.

This sequence belongs to the SNF2/RAD54 helicase family. RapA subfamily. In terms of assembly, interacts with the RNAP. Has a higher affinity for the core RNAP than for the holoenzyme. Its ATPase activity is stimulated by binding to RNAP.

Its function is as follows. Transcription regulator that activates transcription by stimulating RNA polymerase (RNAP) recycling in case of stress conditions such as supercoiled DNA or high salt concentrations. Probably acts by releasing the RNAP, when it is trapped or immobilized on tightly supercoiled DNA. Does not activate transcription on linear DNA. Probably not involved in DNA repair. In Aeromonas salmonicida (strain A449), this protein is RNA polymerase-associated protein RapA.